We begin with the raw amino-acid sequence, 249 residues long: UPF0309 protein GTNG_1302 (249 aa).

The SIS domain maps to 31 to 214; it reads VSKAVQNGGI…ALMAENGVEP (184 aa).

The protein belongs to the UPF0309 family.

The polypeptide is UPF0309 protein GTNG_1302 (Geobacillus thermodenitrificans (strain NG80-2)).